Reading from the N-terminus, the 495-residue chain is Transcription termination/antitermination protein NusA (495 aa).

One can recognise an S1 motif domain in the interval 135–200 (GEIITGVVKK…RGAQLFVTRS (66 aa)). A KH domain is found at 302–368 (KHTMDIAVEA…FTKYLDIDED (67 aa)). Tandem repeats lie at residues 364–414 (DIDE…KNAL) and 439–489 (GVDR…RNIC). Residues 364–489 (DIDEDFATVL…ALIMAARNIC (126 aa)) are 2 X 51 AA approximate repeats.

This sequence belongs to the NusA family. As to quaternary structure, monomer. Binds directly to the core enzyme of the DNA-dependent RNA polymerase and to nascent RNA.

It localises to the cytoplasm. Its function is as follows. Participates in both transcription termination and antitermination. The protein is Transcription termination/antitermination protein NusA of Shigella flexneri.